Here is a 341-residue protein sequence, read N- to C-terminus: Phosphate acyltransferase (341 aa).

The protein belongs to the PlsX family. In terms of assembly, homodimer. Probably interacts with PlsY.

The protein localises to the cytoplasm. It carries out the reaction a fatty acyl-[ACP] + phosphate = an acyl phosphate + holo-[ACP]. It participates in lipid metabolism; phospholipid metabolism. Catalyzes the reversible formation of acyl-phosphate (acyl-PO(4)) from acyl-[acyl-carrier-protein] (acyl-ACP). This enzyme utilizes acyl-ACP as fatty acyl donor, but not acyl-CoA. This is Phosphate acyltransferase from Pseudoalteromonas atlantica (strain T6c / ATCC BAA-1087).